The following is a 333-amino-acid chain: D-fructose 1,6-bisphosphatase class 2/sedoheptulose 1,7-bisphosphatase (333 aa).

Mn(2+) contacts are provided by Asp33, Glu57, Asp85, and Glu88. Residues 88-90, Tyr119, 164-166, and 186-188 contribute to the substrate site; these read EGT, RTR, and DGD. Glu213 provides a ligand contact to Mn(2+).

This sequence belongs to the FBPase class 2 family. In terms of assembly, homotetramer. Requires Mn(2+) as cofactor.

The enzyme catalyses beta-D-fructose 1,6-bisphosphate + H2O = beta-D-fructose 6-phosphate + phosphate. It catalyses the reaction D-sedoheptulose 1,7-bisphosphate + H2O = D-sedoheptulose 7-phosphate + phosphate. Its pathway is carbohydrate biosynthesis; Calvin cycle. In terms of biological role, catalyzes the hydrolysis of fructose 1,6-bisphosphate (Fru 1,6-P2) and sedoheptulose 1,7-bisphosphate (Sed 1,7-P2) to fructose 6-phosphate and sedoheptulose 7-phosphate, respectively. The chain is D-fructose 1,6-bisphosphatase class 2/sedoheptulose 1,7-bisphosphatase from Prochlorococcus marinus (strain AS9601).